We begin with the raw amino-acid sequence, 127 residues long: Large ribosomal subunit protein bL17 (127 aa).

The protein belongs to the bacterial ribosomal protein bL17 family. As to quaternary structure, part of the 50S ribosomal subunit. Contacts protein L32.

In Pelobacter propionicus (strain DSM 2379 / NBRC 103807 / OttBd1), this protein is Large ribosomal subunit protein bL17.